The following is a 342-amino-acid chain: Cyclin-dependent kinase-like 4 (342 aa).

Residues Tyr-4 to Phe-286 enclose the Protein kinase domain. ATP is bound by residues Ile-10–Val-18 and Lys-33. The [NKR]KIAxRE signature appears at Arg-45–Glu-51. The active-site Proton acceptor is Asp-126. The tract at residues Lys-295–Arg-328 is disordered.

This sequence belongs to the protein kinase superfamily. CMGC Ser/Thr protein kinase family. CDC2/CDKX subfamily.

The protein resides in the cytoplasm. The catalysed reaction is L-seryl-[protein] + ATP = O-phospho-L-seryl-[protein] + ADP + H(+). The enzyme catalyses L-threonyl-[protein] + ATP = O-phospho-L-threonyl-[protein] + ADP + H(+). This chain is Cyclin-dependent kinase-like 4 (Cdkl4), found in Mus musculus (Mouse).